Here is a 662-residue protein sequence, read N- to C-terminus: ABC transporter G family member 17 (662 aa).

An ABC transporter domain is found at 22-276 (LAFNDLTYNV…FSEFGSPIPE (255 aa)). 69 to 76 (GASGAGKS) contributes to the ATP binding site. One can recognise an ABC transmembrane type-2 domain in the interval 356-566 (VETVILAKRY…PYEAVLHNEF (211 aa)). The next 6 membrane-spanning stretches (helical) occupy residues 375-395 (LIGT…TVYW), 410-430 (FFSF…PAFI), 451-471 (VISH…GFAA), 486-508 (FIYY…TFVS), 514-536 (VMMS…GFYV), and 635-655 (LWVT…SLLL).

This sequence belongs to the ABC transporter superfamily. ABCG family. Eye pigment precursor importer (TC 3.A.1.204) subfamily.

The protein resides in the membrane. This is ABC transporter G family member 17 (ABCG17) from Arabidopsis thaliana (Mouse-ear cress).